Here is a 263-residue protein sequence, read N- to C-terminus: Hydroxyethylthiazole kinase (263 aa).

Position 39 (M39) interacts with substrate. Positions 115 and 160 each coordinate ATP. G187 contacts substrate.

This sequence belongs to the Thz kinase family. Requires Mg(2+) as cofactor.

The enzyme catalyses 5-(2-hydroxyethyl)-4-methylthiazole + ATP = 4-methyl-5-(2-phosphooxyethyl)-thiazole + ADP + H(+). It functions in the pathway cofactor biosynthesis; thiamine diphosphate biosynthesis; 4-methyl-5-(2-phosphoethyl)-thiazole from 5-(2-hydroxyethyl)-4-methylthiazole: step 1/1. Its function is as follows. Catalyzes the phosphorylation of the hydroxyl group of 4-methyl-5-beta-hydroxyethylthiazole (THZ). The protein is Hydroxyethylthiazole kinase of Staphylococcus saprophyticus subsp. saprophyticus (strain ATCC 15305 / DSM 20229 / NCIMB 8711 / NCTC 7292 / S-41).